A 325-amino-acid polypeptide reads, in one-letter code: Probable transcription factor At4g01260 (325 aa).

Residues 1 to 98 form a disordered region; sequence MAPKQLKKIE…SMGEEDVKKK (98 aa). 2 stretches are compositionally biased toward low complexity: residues 23-32 and 49-69; these read ASSGESATSG and KPVV…ESST. The segment covering 73-83 has biased composition (basic and acidic residues); sequence RSFEKTDEMSK.

This sequence belongs to the GeBP family.

The polypeptide is Probable transcription factor At4g01260 (Arabidopsis thaliana (Mouse-ear cress)).